A 269-amino-acid polypeptide reads, in one-letter code: Pyrroline-5-carboxylate reductase (269 aa).

Belongs to the pyrroline-5-carboxylate reductase family.

It localises to the cytoplasm. It catalyses the reaction L-proline + NADP(+) = (S)-1-pyrroline-5-carboxylate + NADPH + 2 H(+). The catalysed reaction is L-proline + NAD(+) = (S)-1-pyrroline-5-carboxylate + NADH + 2 H(+). The protein operates within amino-acid biosynthesis; L-proline biosynthesis; L-proline from L-glutamate 5-semialdehyde: step 1/1. With respect to regulation, inhibited by p-chloromercuribenzoate. Catalyzes the reduction of 1-pyrroline-5-carboxylate (PCA) to L-proline. Does not catalyze the reverse reaction. In Escherichia coli (strain K12), this protein is Pyrroline-5-carboxylate reductase.